Reading from the N-terminus, the 410-residue chain is Mating-type locus allele B1 protein (410 aa).

Positions 1–110 are variable domain between B alleles; the sequence is MSSDPNFSLI…FNVVSPDVGC (110 aa). The segment at residues 107–184 is a DNA-binding region (homeobox; TALE-type); that stretch reads DVGCRNLSED…NARRRSGWSH (78 aa). The interval 111–410 is highly conserved between B alleles; it reads RNLSEDLPAY…PFLCLSVAFV (300 aa). Disordered regions lie at residues 202 to 239, 278 to 335, and 374 to 395; these read RAKLSSSNQSTPPSSTSDSLSNNLDDVLSDNLGRPLTP, TPKP…TPEL, and ARGNRKVKALPKRAGKQQPDEV. A compositionally biased stretch (low complexity) spans 205–233; sequence LSSSNQSTPPSSTSDSLSNNLDDVLSDNL. Positions 276–308 match the Nuclear localization signal motif; sequence KKTPKPGMPRPVTTVAKRHPARKTKPAAKPKSR. A compositionally biased stretch (basic residues) spans 291-307; sequence AKRHPARKTKPAAKPKS. A compositionally biased stretch (polar residues) spans 312–335; the sequence is PRASTTPSIDSTLDSSKLESTPEL. Residues 333–410 form a not essential for B1 function region; sequence PELSMCSTAD…PFLCLSVAFV (78 aa). The segment covering 375 to 388 has biased composition (basic residues); that stretch reads RGNRKVKALPKRAG.

Belongs to the TALE/M-ATYP homeobox family.

The protein resides in the nucleus. The B locus has at least 25 alleles, and any combination of two different B alleles yields a multimeric regulatory protein, that activates genes responsible for the pathogenicity and for the sexual development of the fungus within the corn plant. The sequence is that of Mating-type locus allele B1 protein from Mycosarcoma maydis (Corn smut fungus).